The primary structure comprises 201 residues: Small ribosomal subunit protein uS4 (201 aa).

The S4 RNA-binding domain occupies 91–151 (SRLDNVVYRA…EKSQKMIWFE (61 aa)).

It belongs to the universal ribosomal protein uS4 family. As to quaternary structure, part of the 30S ribosomal subunit. Contacts protein S5. The interaction surface between S4 and S5 is involved in control of translational fidelity.

Functionally, one of the primary rRNA binding proteins, it binds directly to 16S rRNA where it nucleates assembly of the body of the 30S subunit. Its function is as follows. With S5 and S12 plays an important role in translational accuracy. This is Small ribosomal subunit protein uS4 from Corynebacterium diphtheriae (strain ATCC 700971 / NCTC 13129 / Biotype gravis).